A 313-amino-acid polypeptide reads, in one-letter code: Glyoxylate/hydroxypyruvate reductase A (313 aa).

The active site involves Arg-228. The active-site Proton donor is His-276.

Belongs to the D-isomer specific 2-hydroxyacid dehydrogenase family. GhrA subfamily.

Its subcellular location is the cytoplasm. The catalysed reaction is glycolate + NADP(+) = glyoxylate + NADPH + H(+). It catalyses the reaction (R)-glycerate + NAD(+) = 3-hydroxypyruvate + NADH + H(+). It carries out the reaction (R)-glycerate + NADP(+) = 3-hydroxypyruvate + NADPH + H(+). Its function is as follows. Catalyzes the NADPH-dependent reduction of glyoxylate and hydroxypyruvate into glycolate and glycerate, respectively. This chain is Glyoxylate/hydroxypyruvate reductase A, found in Photorhabdus laumondii subsp. laumondii (strain DSM 15139 / CIP 105565 / TT01) (Photorhabdus luminescens subsp. laumondii).